A 229-amino-acid polypeptide reads, in one-letter code: Potassium/proton antiporter CemA (229 aa).

A run of 4 helical transmembrane segments spans residues 7–27 (FIPL…SFTF), 107–127 (ILHF…SILG), 154–174 (ILLL…ELVI), and 189–209 (IISG…KYWI).

It belongs to the CemA family.

The protein resides in the plastid. Its subcellular location is the chloroplast inner membrane. The catalysed reaction is K(+)(in) + H(+)(out) = K(+)(out) + H(+)(in). Its function is as follows. Contributes to K(+)/H(+) antiport activity by supporting proton efflux to control proton extrusion and homeostasis in chloroplasts in a light-dependent manner to modulate photosynthesis. Prevents excessive induction of non-photochemical quenching (NPQ) under continuous-light conditions. Indirectly promotes efficient inorganic carbon uptake into chloroplasts. The protein is Potassium/proton antiporter CemA of Glycine max (Soybean).